The following is a 139-amino-acid chain: Large ribosomal subunit protein bL17 (139 aa).

The protein belongs to the bacterial ribosomal protein bL17 family. As to quaternary structure, part of the 50S ribosomal subunit. Contacts protein L32.

The chain is Large ribosomal subunit protein bL17 from Sphingopyxis alaskensis (strain DSM 13593 / LMG 18877 / RB2256) (Sphingomonas alaskensis).